The sequence spans 780 residues: Cullin-1 (780 aa).

One can recognise a Cullin neddylation domain in the interval 710–771 (DRKSVISACI…EKEYMLRTEG (62 aa)). Lys-724 participates in a covalent cross-link: Glycyl lysine isopeptide (Lys-Gly) (interchain with G-Cter in NEDD8).

This sequence belongs to the cullin family. As to quaternary structure, component of an SCF (SKP1-CUL1-F-box protein) E3 ubiquitin ligase complex composed of cul-1, fsn-1, rpm-1 and skr-1. Interacts with Skp1-related proteins skr-1, skr-2, skr-3, skr-4, skr-7, skr-8, skr-9 and skr-10. In terms of processing, neddylated; which enhances the ubiquitination activity of SCF. As to expression, ubiquitous.

The protein localises to the cytoplasm. It functions in the pathway protein modification; protein ubiquitination. In terms of biological role, probable core component of multiple cullin-RING-based SCF (SKP1-CUL1-F-box) E3 ubiquitin-protein ligase complexes which mediate the ubiquitination and subsequent proteasomal degradation of target proteins. As a scaffold protein may contribute to catalysis through positioning of the substrate and the ubiquitin-conjugating enzyme. Required for developmentally programmed transitions from the G1 phase of the cell cycle to the G0 phase or the apoptotic pathway. This is Cullin-1 (cul-1) from Caenorhabditis elegans.